Consider the following 239-residue polypeptide: Homeobox protein Nkx-2.8 (239 aa).

The segment covering 1–11 (MATSGRLSFTV) has biased composition (polar residues). The tract at residues 1–87 (MATSGRLSFT…GSDAEKRKKR (87 aa)) is disordered. Positions 21-32 (DAQHLPRREPEP) are enriched in basic and acidic residues. The span at 62–79 (SPPDSSQRPSARPASPGS) shows a compositional bias: low complexity. A DNA-binding region (homeobox) is located at residues 84–143 (RKKRRVLFSKAQTLELERRFRQQRYLSAPEREQLASLLRLTPTQVKIWFQNHRYKLKRAR).

The protein belongs to the NK-2 homeobox family.

It localises to the nucleus. This chain is Homeobox protein Nkx-2.8 (NKX2-8), found in Homo sapiens (Human).